The following is a 97-amino-acid chain: NADH-quinone oxidoreductase subunit K (97 aa).

3 helical membrane-spanning segments follow: residues 1 to 21, 25 to 45, and 57 to 77; these read MSEY…GVLY, ILVM…LMVY, and VFVF…LAIL.

This sequence belongs to the complex I subunit 4L family. NDH-1 is composed of 14 different subunits. Subunits NuoA, H, J, K, L, M, N constitute the membrane sector of the complex.

The protein localises to the cell inner membrane. The enzyme catalyses a quinone + NADH + 5 H(+)(in) = a quinol + NAD(+) + 4 H(+)(out). In terms of biological role, NDH-1 shuttles electrons from NADH, via FMN and iron-sulfur (Fe-S) centers, to quinones in the respiratory chain. The immediate electron acceptor for the enzyme in this species is believed to be a menaquinone. Couples the redox reaction to proton translocation (for every two electrons transferred, four hydrogen ions are translocated across the cytoplasmic membrane), and thus conserves the redox energy in a proton gradient. The protein is NADH-quinone oxidoreductase subunit K of Cytophaga hutchinsonii (strain ATCC 33406 / DSM 1761 / CIP 103989 / NBRC 15051 / NCIMB 9469 / D465).